Consider the following 337-residue polypeptide: MKDRYILAVESSCDETSVAILKNDDVLLTNIIASQVESHKRFGGVVPEVASRHHVEVVTTCFQDALDEAGLEASDIDAVAVTYGPGLVGALLVGIAAAKAFAWANQIPLIPVNHMAGHLMAAREQKELSYPLMALLVSGGHTELVYVPKAGEYHIIGETRDDAVGEAYDKVGRVMGLTYPAGREIDQLAHQGRDTYDFPRAMIKEDHLEFSFSGLKSAFINLHHNAQQKGENLVLEDLCASFQAAVLDILLAKTKKALAKYPVNMLVVAGGVAANQGLRERLASDITETEVVIPPLRLCGDNAGMIALAAAIEYEKHHFAGWDLNAIPSLAFPNYKE.

The Fe cation site is built by His-114 and His-118. Substrate-binding positions include 136–140, Asp-169, Gly-182, Asp-186, and Asn-275; that span reads LVSGG. Asp-301 is a binding site for Fe cation.

This sequence belongs to the KAE1 / TsaD family. The cofactor is Fe(2+).

It localises to the cytoplasm. The catalysed reaction is L-threonylcarbamoyladenylate + adenosine(37) in tRNA = N(6)-L-threonylcarbamoyladenosine(37) in tRNA + AMP + H(+). Its function is as follows. Required for the formation of a threonylcarbamoyl group on adenosine at position 37 (t(6)A37) in tRNAs that read codons beginning with adenine. Is involved in the transfer of the threonylcarbamoyl moiety of threonylcarbamoyl-AMP (TC-AMP) to the N6 group of A37, together with TsaE and TsaB. TsaD likely plays a direct catalytic role in this reaction. In Streptococcus uberis (strain ATCC BAA-854 / 0140J), this protein is tRNA N6-adenosine threonylcarbamoyltransferase.